A 554-amino-acid chain; its full sequence is D-3-phosphoglycerate dehydrogenase (554 aa).

NAD(+) is bound by residues 177-178 (KI), Asp-197, 256-258 (CSR), and Asp-282. Residue Arg-258 is part of the active site. Glu-287 is an active-site residue. His-305 functions as the Proton donor in the catalytic mechanism. 305–308 (HLGA) provides a ligand contact to NAD(+). Residues 482-554 (MLFTLHRDMP…GIRDAYTVKL (73 aa)) enclose the ACT domain.

It belongs to the D-isomer specific 2-hydroxyacid dehydrogenase family.

It carries out the reaction (2R)-3-phosphoglycerate + NAD(+) = 3-phosphooxypyruvate + NADH + H(+). The catalysed reaction is (R)-2-hydroxyglutarate + NAD(+) = 2-oxoglutarate + NADH + H(+). It functions in the pathway amino-acid biosynthesis; L-serine biosynthesis; L-serine from 3-phospho-D-glycerate: step 1/3. In terms of biological role, catalyzes the reversible oxidation of 3-phospho-D-glycerate to 3-phosphonooxypyruvate, the first step of the phosphorylated L-serine biosynthesis pathway. Also catalyzes the reversible oxidation of 2-hydroxyglutarate to 2-oxoglutarate. The chain is D-3-phosphoglycerate dehydrogenase (serA) from Synechocystis sp. (strain ATCC 27184 / PCC 6803 / Kazusa).